The following is a 341-amino-acid chain: tRNA N6-adenosine threonylcarbamoyltransferase (341 aa).

2 residues coordinate Fe cation: histidine 111 and histidine 115. Substrate is bound by residues 134–138 (LVSGG), aspartate 167, glycine 180, and asparagine 272. Aspartate 300 serves as a coordination point for Fe cation.

The protein belongs to the KAE1 / TsaD family. It depends on Fe(2+) as a cofactor.

Its subcellular location is the cytoplasm. The enzyme catalyses L-threonylcarbamoyladenylate + adenosine(37) in tRNA = N(6)-L-threonylcarbamoyladenosine(37) in tRNA + AMP + H(+). Its function is as follows. Required for the formation of a threonylcarbamoyl group on adenosine at position 37 (t(6)A37) in tRNAs that read codons beginning with adenine. Is involved in the transfer of the threonylcarbamoyl moiety of threonylcarbamoyl-AMP (TC-AMP) to the N6 group of A37, together with TsaE and TsaB. TsaD likely plays a direct catalytic role in this reaction. The sequence is that of tRNA N6-adenosine threonylcarbamoyltransferase from Blochmanniella pennsylvanica (strain BPEN).